The primary structure comprises 198 residues: Recombination protein RecR (198 aa).

Residues 57–72 (CSVCGHITDQDPCAIC) form a C4-type zinc finger. In terms of domain architecture, Toprim spans 80–175 (SLICVVQDPK…RTTRIAHGLP (96 aa)).

This sequence belongs to the RecR family.

In terms of biological role, may play a role in DNA repair. It seems to be involved in an RecBC-independent recombinational process of DNA repair. It may act with RecF and RecO. The polypeptide is Recombination protein RecR (Oceanobacillus iheyensis (strain DSM 14371 / CIP 107618 / JCM 11309 / KCTC 3954 / HTE831)).